Consider the following 283-residue polypeptide: ATP phosphoribosyltransferase (283 aa).

Belongs to the ATP phosphoribosyltransferase family. Long subfamily. Mg(2+) serves as cofactor.

The protein localises to the cytoplasm. The catalysed reaction is 1-(5-phospho-beta-D-ribosyl)-ATP + diphosphate = 5-phospho-alpha-D-ribose 1-diphosphate + ATP. It participates in amino-acid biosynthesis; L-histidine biosynthesis; L-histidine from 5-phospho-alpha-D-ribose 1-diphosphate: step 1/9. Its activity is regulated as follows. Feedback inhibited by histidine. Functionally, catalyzes the condensation of ATP and 5-phosphoribose 1-diphosphate to form N'-(5'-phosphoribosyl)-ATP (PR-ATP). Has a crucial role in the pathway because the rate of histidine biosynthesis seems to be controlled primarily by regulation of HisG enzymatic activity. This chain is ATP phosphoribosyltransferase, found in Phocaeicola vulgatus (strain ATCC 8482 / DSM 1447 / JCM 5826 / CCUG 4940 / NBRC 14291 / NCTC 11154) (Bacteroides vulgatus).